The chain runs to 239 residues: tRNA (guanine-N(7)-)-methyltransferase (239 aa).

The S-adenosyl-L-methionine site is built by Glu69, Glu94, Asp121, and Asp144. Asp144 is a catalytic residue. Residues Lys148, Asp180, and 217-220 (TKFE) each bind substrate.

The protein belongs to the class I-like SAM-binding methyltransferase superfamily. TrmB family.

The catalysed reaction is guanosine(46) in tRNA + S-adenosyl-L-methionine = N(7)-methylguanosine(46) in tRNA + S-adenosyl-L-homocysteine. The protein operates within tRNA modification; N(7)-methylguanine-tRNA biosynthesis. Its function is as follows. Catalyzes the formation of N(7)-methylguanine at position 46 (m7G46) in tRNA. This chain is tRNA (guanine-N(7)-)-methyltransferase, found in Alcanivorax borkumensis (strain ATCC 700651 / DSM 11573 / NCIMB 13689 / SK2).